A 156-amino-acid polypeptide reads, in one-letter code: ATP synthase subunit b (156 aa).

A helical transmembrane segment spans residues 11–31; that stretch reads LIAFALFVWFCMKFVWPPIIN.

The protein belongs to the ATPase B chain family. As to quaternary structure, F-type ATPases have 2 components, F(1) - the catalytic core - and F(0) - the membrane proton channel. F(1) has five subunits: alpha(3), beta(3), gamma(1), delta(1), epsilon(1). F(0) has three main subunits: a(1), b(2) and c(10-14). The alpha and beta chains form an alternating ring which encloses part of the gamma chain. F(1) is attached to F(0) by a central stalk formed by the gamma and epsilon chains, while a peripheral stalk is formed by the delta and b chains.

It localises to the cell inner membrane. In terms of biological role, f(1)F(0) ATP synthase produces ATP from ADP in the presence of a proton or sodium gradient. F-type ATPases consist of two structural domains, F(1) containing the extramembraneous catalytic core and F(0) containing the membrane proton channel, linked together by a central stalk and a peripheral stalk. During catalysis, ATP synthesis in the catalytic domain of F(1) is coupled via a rotary mechanism of the central stalk subunits to proton translocation. Its function is as follows. Component of the F(0) channel, it forms part of the peripheral stalk, linking F(1) to F(0). The sequence is that of ATP synthase subunit b from Haemophilus influenzae (strain PittEE).